We begin with the raw amino-acid sequence, 127 residues long: UPF0102 protein SYNAS_23220 (127 aa).

This sequence belongs to the UPF0102 family.

The protein is UPF0102 protein SYNAS_23220 of Syntrophus aciditrophicus (strain SB).